We begin with the raw amino-acid sequence, 555 residues long: Aerobic glycerol-3-phosphate dehydrogenase (555 aa).

FAD is bound at residue 24–52; that stretch reads DLFIIGGGITGAGTALDAASRGMKVALSE.

The protein belongs to the FAD-dependent glycerol-3-phosphate dehydrogenase family. The cofactor is FAD.

The protein resides in the cytoplasm. The catalysed reaction is a quinone + sn-glycerol 3-phosphate = dihydroxyacetone phosphate + a quinol. It functions in the pathway polyol metabolism; glycerol degradation via glycerol kinase pathway; glycerone phosphate from sn-glycerol 3-phosphate (aerobic route): step 1/1. This Bacillus subtilis (strain 168) protein is Aerobic glycerol-3-phosphate dehydrogenase (glpD).